The chain runs to 304 residues: Ribonuclease Z (304 aa).

Zn(2+) is bound by residues histidine 63, histidine 65, aspartate 67, histidine 68, histidine 143, aspartate 213, and histidine 271. Residue aspartate 67 is the Proton acceptor of the active site.

Belongs to the RNase Z family. In terms of assembly, homodimer. The cofactor is Zn(2+).

The catalysed reaction is Endonucleolytic cleavage of RNA, removing extra 3' nucleotides from tRNA precursor, generating 3' termini of tRNAs. A 3'-hydroxy group is left at the tRNA terminus and a 5'-phosphoryl group is left at the trailer molecule.. Zinc phosphodiesterase, which displays some tRNA 3'-processing endonuclease activity. Probably involved in tRNA maturation, by removing a 3'-trailer from precursor tRNA. This chain is Ribonuclease Z, found in Porphyromonas gingivalis (strain ATCC BAA-308 / W83).